Consider the following 424-residue polypeptide: Serine--tRNA ligase (424 aa).

230-232 contributes to the L-serine binding site; the sequence is TAE. 261–263 provides a ligand contact to ATP; that stretch reads RSE. Glu-284 is an L-serine binding site. 348–351 provides a ligand contact to ATP; sequence EISS. Ser-384 is an L-serine binding site.

It belongs to the class-II aminoacyl-tRNA synthetase family. Type-1 seryl-tRNA synthetase subfamily. As to quaternary structure, homodimer. The tRNA molecule binds across the dimer.

Its subcellular location is the cytoplasm. The catalysed reaction is tRNA(Ser) + L-serine + ATP = L-seryl-tRNA(Ser) + AMP + diphosphate + H(+). The enzyme catalyses tRNA(Sec) + L-serine + ATP = L-seryl-tRNA(Sec) + AMP + diphosphate + H(+). It participates in aminoacyl-tRNA biosynthesis; selenocysteinyl-tRNA(Sec) biosynthesis; L-seryl-tRNA(Sec) from L-serine and tRNA(Sec): step 1/1. Functionally, catalyzes the attachment of serine to tRNA(Ser). Is also able to aminoacylate tRNA(Sec) with serine, to form the misacylated tRNA L-seryl-tRNA(Sec), which will be further converted into selenocysteinyl-tRNA(Sec). The sequence is that of Serine--tRNA ligase from Streptococcus pneumoniae serotype 2 (strain D39 / NCTC 7466).